Reading from the N-terminus, the 240-residue chain is Flavin-dependent thymidylate synthase (240 aa).

Residues 13-235 (ITVELVKHSA…PETHAAFEKQ (223 aa)) form the ThyX domain. FAD is bound by residues Ser64, 87–89 (RHR), and Glu95. Residues 84–87 (EFMR), 95–99 (EESGR), and Arg167 contribute to the dUMP site. The ThyX motif signature appears at 87–97 (RHRIASYNEES). FAD-binding positions include 183 to 185 (NAR) and Asn189. Position 194 (Arg194) interacts with dUMP. Arg194 acts as the Involved in ionization of N3 of dUMP, leading to its activation in catalysis.

The protein belongs to the thymidylate synthase ThyX family. In terms of assembly, homotetramer. It depends on FAD as a cofactor.

It carries out the reaction dUMP + (6R)-5,10-methylene-5,6,7,8-tetrahydrofolate + NADPH + H(+) = dTMP + (6S)-5,6,7,8-tetrahydrofolate + NADP(+). Its pathway is pyrimidine metabolism; dTTP biosynthesis. Catalyzes the reductive methylation of 2'-deoxyuridine-5'-monophosphate (dUMP) to 2'-deoxythymidine-5'-monophosphate (dTMP) while utilizing 5,10-methylenetetrahydrofolate (mTHF) as the methyl donor, and NADPH and FADH(2) as the reductant. The sequence is that of Flavin-dependent thymidylate synthase from Tropheryma whipplei (strain TW08/27) (Whipple's bacillus).